Reading from the N-terminus, the 186-residue chain is Peptide deformylase (186 aa).

Residues C99 and H141 each coordinate Fe cation. E142 is a catalytic residue. H145 lines the Fe cation pocket.

Belongs to the polypeptide deformylase family. It depends on Fe(2+) as a cofactor.

The catalysed reaction is N-terminal N-formyl-L-methionyl-[peptide] + H2O = N-terminal L-methionyl-[peptide] + formate. In terms of biological role, removes the formyl group from the N-terminal Met of newly synthesized proteins. Requires at least a dipeptide for an efficient rate of reaction. N-terminal L-methionine is a prerequisite for activity but the enzyme has broad specificity at other positions. This Chlamydia pneumoniae (Chlamydophila pneumoniae) protein is Peptide deformylase.